The following is a 628-amino-acid chain: Kinesin-like protein tea2 (628 aa).

Residues 2 to 122 are interaction with mal3; it reads SSSSSKPVNT…TTSQQTNSKG (121 aa). S82 is modified (phosphoserine). The 329-residue stretch at 132–460 folds into the Kinesin motor domain; the sequence is GIITSIRIRP…LKFASRAQNL (329 aa). 218–225 serves as a coordination point for ATP; it reads GMTGTGKT. Positions 530 to 557 form a coiled coil; that stretch reads LRMEELLSDHNFEIADLRDELQDKEQII. The interval 588-628 is disordered; it reads VTRGSRSSSDQFSNETKTEILPDDQQQSKKDSVTQETQLLS. The span at 589–602 shows a compositional bias: polar residues; that stretch reads TRGSRSSSDQFSNE. Positions 603–620 are enriched in basic and acidic residues; that stretch reads TKTEILPDDQQQSKKDSV.

The protein belongs to the TRAFAC class myosin-kinesin ATPase superfamily. Kinesin family. Interacts with mal3 and tip1.

It is found in the cytoplasm. Its subcellular location is the cytoskeleton. Its function is as follows. Promotes microtubule growth, possibly through interactions with the microtubule end, and is important for establishing and maintaining polarized growth along the long axis of the cell. Acts as a kinesin motor protein that moves along microtubules and is required for proper localization of tea1 and tip1 to the cell tips and microtubules, respectively. ATPase activity stimulated via interaction with mal3. This is Kinesin-like protein tea2 from Schizosaccharomyces pombe (strain 972 / ATCC 24843) (Fission yeast).